Reading from the N-terminus, the 243-residue chain is Ornithine decarboxylase antizyme 3 (243 aa).

Residues S6, S9, and S12 each carry the phosphoserine modification.

This sequence belongs to the ODC antizyme family. In terms of assembly, interacts with ODC1 and thereby sterically blocks ODC homodimerization. Interacts with AZIN2; this interaction disrupts the interaction between the antizyme and ODC1. Interacts with GGN. Isoform 2 interacts with PPP1R16A; Modulates PPP1CB activity. In terms of tissue distribution, testis-specific. Isoform 2 is expressed in outer dense fibers, fibrous sheath and the connecting piece of sperm.

It localises to the nucleus. The protein localises to the cytoplasm. It is found in the cell projection. Its subcellular location is the cilium. The protein resides in the flagellum. Functionally, ornithine decarboxylase (ODC) antizyme protein that negatively regulates ODC activity and intracellular polyamine biosynthesis and uptake in response to increased intracellular polyamine levels. Binds to ODC monomers, inhibiting the assembly of the functional ODC homodimers. Does not target the ODC monomers for degradation, which allows a protein synthesis-independent restoration of ODC activity. Stabilizes AZIN2 by interfering with its ubiquitination. Involved in the translocation of AZNI2 from ER-Golgi intermediate compartment (ERGIC) to the cytosol. Probably plays a key role in spermatogenesis by regulating the intracellular concentration of polyamines in haploid germ cells. In terms of biological role, does not possess antizyme activity. Modulates PPP1CB activity through its interaction with PPP1R16A. The polypeptide is Ornithine decarboxylase antizyme 3 (Rattus norvegicus (Rat)).